The sequence spans 569 residues: MVICCAAVNCSNRQGKGEKRAVSFHRFPLKDSKRLIQWLKAVQRDNWTPTKYSFLCSEHFTKDSFSKRLEDQHRLLKPTAVPSIFHLSEKKRGAGGHGHARRKTTAAMRGHTSAETGKGTIGSSLSSSDNLMAKPESRKLKRASPQDDAAPKVTPGAVSQEQGQSLEKTPGDDPAAPLARGQEEAQASATEADHQKASSSTDAEGADKSGISMDDFTPPGSGACKFIGSLHSYSFSSKHTRERPSVPREPMDRKRLKREMEPRCSGNSVAQSPPSSSLTATPQKASQSPSAPPTDVTPKPAAEAVQSEHSDASPMSINEVILSASGACKLIDSLHSYCFSARQNKSQVCCLREQVEKKNGELKSLRQKVSRSDSQVRKLREKLDELRRASLPYLPYLSGLLPPSHEPPKLNPVVEPLSWMLGTWLSDPPGVGTFPTLQPFQYLEEVHISHVGQPMLNFSFNSFHPETHKPMHRECGFIRLKPDTNKVAFVSAQNTGIVEVEEGEVNGQELCVSSHSVSRISFAKEPHVEQITRKFRLNSEGKLEQTVSMATTTQPMTQHLHITYKKVTP.

Residues 1-85 form a THAP-type zinc finger; it reads MVICCAAVNC…LKPTAVPSIF (85 aa). Positions 88–216 are disordered; it reads SEKKRGAGGH…DKSGISMDDF (129 aa). 2 stretches are compositionally biased toward polar residues: residues 121–130 and 157–167; these read IGSSLSSSDN and AVSQEQGQSLE. Serine 159 is modified (phosphoserine). Residues 230–233 carry the HCFC1-binding motif (HBM) motif; sequence LHSY. Residue serine 234 is modified to Phosphoserine. Positions 235–312 are disordered; it reads FSSKHTRERP…EAVQSEHSDA (78 aa). The span at 242-262 shows a compositional bias: basic and acidic residues; sequence ERPSVPREPMDRKRLKREMEP. The span at 265-279 shows a compositional bias: polar residues; the sequence is SGNSVAQSPPSSSLT. The segment covering 280–289 has biased composition (low complexity); that stretch reads ATPQKASQSP. Residues 407–569 form a nitrobindin region; the sequence is PPKLNPVVEP…LHITYKKVTP (163 aa). The heme b site is built by threonine 436 and histidine 559.

This sequence in the C-terminal section; belongs to the nitrobindin family. As to quaternary structure, homodimer. Heme b serves as cofactor.

Its subcellular location is the cytoplasm. It localises to the nucleus. The catalysed reaction is peroxynitrite = nitrate. It participates in nitrogen metabolism. Its function is as follows. Heme-binding protein able to scavenge peroxynitrite and to protect free L-tyrosine against peroxynitrite-mediated nitration, by acting as a peroxynitrite isomerase that converts peroxynitrite to nitrate. Therefore, this protein likely plays a role in peroxynitrite sensing and in the detoxification of reactive nitrogen and oxygen species (RNS and ROS, respectively). Is able to bind nitric oxide (NO) in vitro, but may act as a sensor of peroxynitrite levels in vivo, possibly modulating the transcriptional activity residing in the N-terminal region. In Mus musculus (Mouse), this protein is Peroxynitrite isomerase THAP4.